The primary structure comprises 199 residues: RNA-free ribonuclease P (199 aa).

It belongs to the HARP family.

The enzyme catalyses Endonucleolytic cleavage of RNA, removing 5'-extranucleotides from tRNA precursor.. Functionally, RNA-free RNase P that catalyzes the removal of the 5'-leader sequence from pre-tRNA to produce the mature 5'-terminus. The polypeptide is RNA-free ribonuclease P (Thermococcus onnurineus (strain NA1)).